A 394-amino-acid chain; its full sequence is Elongation factor Tu 1 (394 aa).

A tr-type G domain is found at 10–204 (KPHVNVGTIG…ALDSYIPEPE (195 aa)). Positions 19–26 (GHVDHGKT) are G1. 19–26 (GHVDHGKT) serves as a coordination point for GTP. T26 is a Mg(2+) binding site. A G2 region spans residues 60–64 (GITIN). The segment at 81–84 (DCPG) is G3. GTP contacts are provided by residues 81-85 (DCPGH) and 136-139 (NKCD). The interval 136 to 139 (NKCD) is G4. The G5 stretch occupies residues 174-176 (SAL).

The protein belongs to the TRAFAC class translation factor GTPase superfamily. Classic translation factor GTPase family. EF-Tu/EF-1A subfamily. In terms of assembly, monomer.

Its subcellular location is the cytoplasm. The catalysed reaction is GTP + H2O = GDP + phosphate + H(+). GTP hydrolase that promotes the GTP-dependent binding of aminoacyl-tRNA to the A-site of ribosomes during protein biosynthesis. The chain is Elongation factor Tu 1 from Shewanella oneidensis (strain ATCC 700550 / JCM 31522 / CIP 106686 / LMG 19005 / NCIMB 14063 / MR-1).